Reading from the N-terminus, the 524-residue chain is MSDLYAHRILILDFGSQYTQLIARRVREAGVYCEIHPYDMAESTLRDFAPRGIILSGGPASTVGETAPRLSPLIFELGVPLLGICYGMQVMAAQLGGRVEVSAQREYGYAQVYVHGHSRLLQNIEDHTTAGGEALLDVWMSHGDRVIGLPEGFKRIAATAHAPLAGMADEKRRFYGFQFHPEVTHTRQGIRILERFIYDICGCEALWEPRHIIAKSIENIRTKVGADTVLLGLSGGVDSSVAAALLHKAIGDQLICVFVDNGLLRQGEADQVMATFARHLGIKVIHISAETRFLEALAGVIDPEAKRKIIGRVFIEVFEEEAAKLPNAQWLAQGTIYPDVIESAGGKTGKAQVIKSHHNVGGLPEELNLKLLEPLRELFKDEVRQLGTELGLPFELVYRHPFPGPGLGVRILGEVKKEYADLLRLADAIFIEELHAHDWYDKVSQAFAVFLPVKSVGVMGDGRCYDFVVALRAVESVDFMTARWAHLPYDFLDHVSRRIINEVAGISRVTYDISGKPPATIEWE.

The region spanning 8–206 is the Glutamine amidotransferase type-1 domain; it reads RILILDFGSQ…IYDICGCEAL (199 aa). Cysteine 85 functions as the Nucleophile in the catalytic mechanism. Active-site residues include histidine 180 and glutamate 182. One can recognise a GMPS ATP-PPase domain in the interval 207-399; it reads WEPRHIIAKS…LGLPFELVYR (193 aa). Residue 234–240 coordinates ATP; sequence SGGVDSS.

In terms of assembly, homodimer.

It carries out the reaction XMP + L-glutamine + ATP + H2O = GMP + L-glutamate + AMP + diphosphate + 2 H(+). It participates in purine metabolism; GMP biosynthesis; GMP from XMP (L-Gln route): step 1/1. Catalyzes the synthesis of GMP from XMP. The polypeptide is GMP synthase [glutamine-hydrolyzing] (Nitrosococcus oceani (strain ATCC 19707 / BCRC 17464 / JCM 30415 / NCIMB 11848 / C-107)).